A 157-amino-acid polypeptide reads, in one-letter code: 3-hydroxyacyl-[acyl-carrier-protein] dehydratase FabZ (157 aa).

Residue His-58 is part of the active site.

The protein belongs to the thioester dehydratase family. FabZ subfamily.

It localises to the cytoplasm. It carries out the reaction a (3R)-hydroxyacyl-[ACP] = a (2E)-enoyl-[ACP] + H2O. Involved in unsaturated fatty acids biosynthesis. Catalyzes the dehydration of short chain beta-hydroxyacyl-ACPs and long chain saturated and unsaturated beta-hydroxyacyl-ACPs. In Brucella ovis (strain ATCC 25840 / 63/290 / NCTC 10512), this protein is 3-hydroxyacyl-[acyl-carrier-protein] dehydratase FabZ.